Here is a 214-residue protein sequence, read N- to C-terminus: Probable nicotinate-nucleotide adenylyltransferase (214 aa).

The protein belongs to the NadD family.

It carries out the reaction nicotinate beta-D-ribonucleotide + ATP + H(+) = deamido-NAD(+) + diphosphate. The protein operates within cofactor biosynthesis; NAD(+) biosynthesis; deamido-NAD(+) from nicotinate D-ribonucleotide: step 1/1. Functionally, catalyzes the reversible adenylation of nicotinate mononucleotide (NaMN) to nicotinic acid adenine dinucleotide (NaAD). The chain is Probable nicotinate-nucleotide adenylyltransferase from Pseudomonas aeruginosa (strain UCBPP-PA14).